The sequence spans 107 residues: Replication protein A 14 kDa subunit A (107 aa).

Met-1 bears the N-acetylmethionine mark.

This sequence belongs to the replication factor A protein 3 family. As to quaternary structure, component of the heterotrimeric canonical replication protein A complex (RPA).

The protein resides in the nucleus. Functionally, as part of the replication protein A (RPA/RP-A), a single-stranded DNA-binding heterotrimeric complex, may play an essential role in DNA replication, recombination and repair. Binds and stabilizes single-stranded DNA intermediates, preventing complementary DNA reannealing and recruiting different proteins involved in DNA metabolism. The protein is Replication protein A 14 kDa subunit A (RPA3A) of Arabidopsis thaliana (Mouse-ear cress).